Reading from the N-terminus, the 220-residue chain is Octanoyltransferase (220 aa).

A BPL/LPL catalytic domain is found at Pro27–Val208. Substrate contacts are provided by residues Arg66–His73, Ala139–Gly141, and Gly152–Ala154. Cys170 (acyl-thioester intermediate) is an active-site residue.

This sequence belongs to the LipB family.

The protein localises to the cytoplasm. It carries out the reaction octanoyl-[ACP] + L-lysyl-[protein] = N(6)-octanoyl-L-lysyl-[protein] + holo-[ACP] + H(+). The protein operates within protein modification; protein lipoylation via endogenous pathway; protein N(6)-(lipoyl)lysine from octanoyl-[acyl-carrier-protein]: step 1/2. In terms of biological role, catalyzes the transfer of endogenously produced octanoic acid from octanoyl-acyl-carrier-protein onto the lipoyl domains of lipoate-dependent enzymes. Lipoyl-ACP can also act as a substrate although octanoyl-ACP is likely to be the physiological substrate. This Bordetella pertussis (strain Tohama I / ATCC BAA-589 / NCTC 13251) protein is Octanoyltransferase.